A 254-amino-acid polypeptide reads, in one-letter code: Phosphoglycerate mutase 1 (254 aa).

Residues 10–17 (RHGESAWN) and 23–24 (SG) each bind substrate. H11 serves as the catalytic Tele-phosphohistidine intermediate. A phosphoserine mark is found at S14 and S23. The residue at position 26 (Y26) is a Phosphotyrosine. S31 is modified (phosphoserine). Substrate-binding positions include R62, 89 to 92 (ERHY), and K100. E89 (proton donor/acceptor) is an active-site residue. K106 is subject to N6-acetyllysine. 116–117 (RR) contacts substrate. S118 carries the phosphoserine modification. A substrate-binding site is contributed by 187–188 (GN). N6-acetyllysine; alternate is present on K251. Position 251 is an N6-succinyllysine; alternate (K251). 2 positions are modified to N6-acetyllysine: K253 and K254.

It belongs to the phosphoglycerate mutase family. BPG-dependent PGAM subfamily. In terms of assembly, homodimer. Post-translationally, acetylated at Lys-253, Lys-253 and Lys-254 under high glucose condition. Acetylation increases catalytic activity. Under glucose restriction SIRT1 levels dramatically increase and it deacetylates the enzyme.

The enzyme catalyses (2R)-2-phosphoglycerate = (2R)-3-phosphoglycerate. It carries out the reaction (2R)-3-phospho-glyceroyl phosphate = (2R)-2,3-bisphosphoglycerate + H(+). In terms of biological role, catalyzes the interconversion of 2-phosphoglycerate and 3-phosphoglyceratea crucial step in glycolysis, by using 2,3-bisphosphoglycerate. Also catalyzes the interconversion of (2R)-2,3-bisphosphoglycerate and (2R)-3-phospho-glyceroyl phosphate. This chain is Phosphoglycerate mutase 1, found in Mus musculus (Mouse).